Reading from the N-terminus, the 240-residue chain is Protein unc-119 homolog A (240 aa).

Residues methionine 1–glycine 11 are compositionally biased toward gly residues. Positions methionine 1 to proline 59 are required for midbody localization. The segment at methionine 1 to glycine 61 is disordered. Serine 37, serine 39, and serine 41 each carry phosphoserine; by CK2. The interval leucine 121–proline 240 is required for centrosome localization. Residue tyrosine 131 coordinates tetradecanoate.

This sequence belongs to the PDE6D/unc-119 family. Interacts with CABP4; in the absence of calcium. Interacts with DNM1; leading to a decrease of DNM1 GTPase activity. May interact with GTP-bound ARL1. Interacts with ARL2 and ARL3 (GTP-bound forms); this promotes the release of myyristoylated cargo proteins. Found in a complex with ARL3, RP2 and UNC119; RP2 induces hydrolysis of GTP ARL3 in the complex, leading to the release of UNC119. Interacts with NPHP3 (when myristoylated). Interacts with CYS1 (when myristoylated). Interacts with MACIR; interaction only takes place when UNC119 is not liganded with myristoylated proteins. Interacts with LCK; this interaction plays a crucial role in activation of LCK. Interacts with FYN. Interacts with RAB11A; in a cell cycle-dependent manner. Interacts with LYN (via SH2 and SH3 domains); leading to LYN activation. Found in a complex with ABL1, ABL2, CRK and UNC119; leading to the inhibition of CRK phosphorylation by ABL kinases. Interacts with CD44; leading to Shigella invasion. Interacts with KLHL18 (via kelch repeats). Interacts with PPP3CA, PPP3CB and PPP3CC. Interacts with USP48; this interaction promotes UNC119 stability. In terms of processing, phosphorylation suppresses its interaction with KLHL18 and down-regulates its KLHL18-mediated degradation. Phosphorylated more under light conditions than dark conditions. Dephosphorylated by calcineurin. In terms of tissue distribution, abundantly expressed in retina, in photoreceptor synapses and inner segments. Expressed in a much lesser extent in several other tissues.

It is found in the cytoplasm. It localises to the cytoskeleton. The protein localises to the microtubule organizing center. The protein resides in the centrosome. Its subcellular location is the spindle pole. It is found in the spindle. Involved in synaptic functions in photoreceptor cells, the signal transduction in immune cells as a Src family kinase activator, endosome recycling, the uptake of bacteria and endocytosis, protein trafficking in sensory neurons and as lipid-binding chaperone with specificity for a diverse subset of myristoylated proteins. Specifically binds the myristoyl moiety of a subset of N-terminally myristoylated proteins and is required for their localization. Binds myristoylated GNAT1 and is required for G-protein localization and trafficking in sensory neurons. Probably plays a role in trafficking proteins in photoreceptor cells. Plays important roles in mediating Src family kinase signals for the completion of cytokinesis via RAB11A. In Homo sapiens (Human), this protein is Protein unc-119 homolog A (UNC119).